A 1187-amino-acid polypeptide reads, in one-letter code: MDVDSEEKRHRTRSKGVRVPVEPAIQELFSCPTPGCDGSGHVSGKYARHRSVYGCPLAKKRKTQDKQPQEPAPKRKPFAVKADSSSVDECYESDGTEDMDDKEEDDDEEFSEDNDEQGDDDDEDEVDREDEEEIEEEDDEEDDDDEDGDDVEEEEEDDDEEEEEEEEEEENEDHQMSCTRIMQDTDKDDNNNDEYDNYDELVAKSLLNLGKIAEDAAYRARTESEMNSNTSNSLEDDSDKNENLGRKSELSLDLDSDVVRETVDSLKLLAQGHGVVLSENISDRSYAEGMSQQDSRNMNYVMLGKPMNNGLMEKMVEESDEEVCLSSLECLRNQCFDLARKLSETNPQDRSQPPNMSVRQHVRQEDDFPGRTPDRSYSDMMNLMRLEEQLSPRSRTFSSCAKEDGCHERDDDTTSVNSDRSEEVFDMTKGNLTLLEKAIALETERAKAMREKMAMDAGRRDNLRSYEDQSPRQLAGEDRKSKSSDSHVKKPYYGKDPSRTEKRESKCPTPGCDGTGHVTGLYPHHRSLSGCPHKDRVPPEILAMHENVLKCPTPGCTGRGHVNSNRNSHRSLSGCPIAAAEKLAKAQEKHQSCDVSKSNQASDRVLRPMCFVKQLEIPQYGYRNNVPTTTPRSNLAKELEKYSKTSFEYNSYDNHTYGKRAIAPKVQTRDISPKGYDDAKRYCKNASPSSSTTSSYAPSSSSNLSCGGGSSASSTCSKSSFDYTHDMEAAHMAATAILNLSTRCREMPQNLSTKPQDLCTARNPDMEVDENGTLDLSMNKQRPRDSCCPVLTPLEPMSPQQQAVMSSRCFQLSEGDCWDLPVDYTKMKPRRVDEDEPKEITPEDLDPFQEALEERRYPGEVTIPSPKPKYPQCKESKKDLITLSGCPLADKSIRSMLATSSQELKCPTPGCDGSGHITGNYASHRSLSGCPRAKKSGIRIAQSKEDKEDQEPIRCPVPGCDGQGHITGKYASHRSASGCPLAAKRQKDGYLNGSQFSWKSVKTEGMSCPTPGCDGSGHVSGSFLTHRSLSGCPRATSAMKKAKLSGEQMLTIKQRASNGIENDEEIKQLDEEIKELNESNSQMEADMIKLRTQITTMESNLKTIEEENKVIEQQNESLLHELANLSQSLIHSLANIQLPHMDPINEQNFDAYVTTLTEMYTNQDRYQSPENKALLENIKQAVRGIQV.

Residues 1–22 form a disordered region; sequence MDVDSEEKRHRTRSKGVRVPVE. A CCHHC-type 1 zinc finger spans residues 22–65; that stretch reads EPAIQELFSCPTPGCDGSGHVSGKYARHRSVYGCPLAKKRKTQD. 4 residues coordinate Zn(2+): C31, C36, H49, and C55. Disordered regions lie at residues 56-178 and 221-248; these read PLAK…QMSC and RTES…GRKS. The segment covering 89 to 172 has biased composition (acidic residues); sequence ECYESDGTED…EEEEEEEENE (84 aa). The residue at position 251 (S251) is a Phosphoserine. Disordered regions lie at residues 343–422 and 450–514; these read SETN…DRSE and REKM…GCDG. The segment covering 344 to 358 has biased composition (polar residues); the sequence is ETNPQDRSQPPNMSV. Basic and acidic residues-rich tracts occupy residues 362-377, 401-412, 450-488, and 496-506; these read VRQE…DRSY, AKEDGCHERDDD, REKM…DSHV, and DPSRTEKRESK. CCHHC-type zinc fingers lie at residues 498–541 and 542–585; these read SRTE…PPEI and LAMH…KLAK. C507, C512, H525, C531, C551, C556, H569, and C575 together coordinate Zn(2+). A disordered region spans residues 686-710; it reads ASPSSSTTSSYAPSSSSNLSCGGGS. CCHHC-type zinc fingers lie at residues 897–940, 946–989, and 999–1042; these read LATS…GIRI, DKED…QKDG, and KSVK…MKKA. 12 residues coordinate Zn(2+): C906, C911, H924, C930, C955, C960, H973, C979, C1008, C1013, H1026, and C1032. Residues 1058–1132 adopt a coiled-coil conformation; it reads NGIENDEEIK…ANLSQSLIHS (75 aa).

Belongs to the MYT1 family. As to quaternary structure, interacts with SIN3B. Brain.

The protein localises to the nucleus. The protein resides in the chromosome. In terms of biological role, transcription factor that plays a key role in neuronal differentiation by specifically repressing expression of non-neuronal genes during neuron differentiation. In contrast to other transcription repressors that inhibit specific lineages, mediates repression of multiple differentiation programs. Also represses expression of negative regulators of neurogenesis, such as members of the Notch signaling pathway, including HES1. The combination of three transcription factors, ASCL1, POU3F2/BRN2 and MYT1L, is sufficient to reprogram fibroblasts and other somatic cells into induced neuronal (iN) cells in vitro. Directly binds the 5'-AAGTT-3' core motif present on the promoter of target genes and represses transcription by recruiting a multiprotein complex containing SIN3B. The 5'-AAGTT-3' core motif is absent from the promoter of neural genes. This Mus musculus (Mouse) protein is Myelin transcription factor 1-like protein.